Reading from the N-terminus, the 642-residue chain is Threonine--tRNA ligase (642 aa).

One can recognise a TGS domain in the interval 1–61 (MPVITLPDGS…EHDAQIAIIT (61 aa)). The tract at residues 243 to 534 (DHRKIGKQLD…LTEEYAGFYP (292 aa)) is catalytic. Cysteine 334, histidine 385, and histidine 511 together coordinate Zn(2+).

This sequence belongs to the class-II aminoacyl-tRNA synthetase family. As to quaternary structure, homodimer. The cofactor is Zn(2+).

The protein resides in the cytoplasm. It carries out the reaction tRNA(Thr) + L-threonine + ATP = L-threonyl-tRNA(Thr) + AMP + diphosphate + H(+). In terms of biological role, catalyzes the attachment of threonine to tRNA(Thr) in a two-step reaction: L-threonine is first activated by ATP to form Thr-AMP and then transferred to the acceptor end of tRNA(Thr). Also edits incorrectly charged L-seryl-tRNA(Thr). The protein is Threonine--tRNA ligase of Sodalis glossinidius (strain morsitans).